Reading from the N-terminus, the 251-residue chain is Adenosylcobinamide-GDP ribazoletransferase (251 aa).

Transmembrane regions (helical) follow at residues 29–49, 65–85, 110–130, 136–156, 175–195, and 198–218; these read FAGM…ILAV, SLLI…DGAM, AFGA…LCYL, LLIL…IVRY, AIDL…IARF, and LTVA…TGAW.

The protein belongs to the CobS family. It depends on Mg(2+) as a cofactor.

It is found in the cell inner membrane. The enzyme catalyses alpha-ribazole + adenosylcob(III)inamide-GDP = adenosylcob(III)alamin + GMP + H(+). It catalyses the reaction alpha-ribazole 5'-phosphate + adenosylcob(III)inamide-GDP = adenosylcob(III)alamin 5'-phosphate + GMP + H(+). It functions in the pathway cofactor biosynthesis; adenosylcobalamin biosynthesis; adenosylcobalamin from cob(II)yrinate a,c-diamide: step 7/7. Functionally, joins adenosylcobinamide-GDP and alpha-ribazole to generate adenosylcobalamin (Ado-cobalamin). Also synthesizes adenosylcobalamin 5'-phosphate from adenosylcobinamide-GDP and alpha-ribazole 5'-phosphate. This is Adenosylcobinamide-GDP ribazoletransferase from Synechococcus elongatus (strain ATCC 33912 / PCC 7942 / FACHB-805) (Anacystis nidulans R2).